We begin with the raw amino-acid sequence, 738 residues long: Protein Aster-B (738 aa).

Residues 1–81 (MKGFKLSCTA…SGGKNSKKSQ (81 aa)) are disordered. A compositionally biased stretch (polar residues) spans 8–19 (CTASNSNRSTPA). Phosphoserine is present on residues S28 and S30. Positions 41–51 (MVEKGSDHSSD) are enriched in basic and acidic residues. Low complexity predominate over residues 59-70 (QGVQRSCSSQSG). The GRAM domain occupies 96-163 (EDFRKLFKQL…KDICSMTKEK (68 aa)). Residues 254–299 (EENEVNDSSSKSSIETKPDASPQLPKKSITNSTLTSTGSSEAPVSF) form a disordered region. Over residues 259 to 268 (NDSSSKSSIE) the composition is skewed to polar residues. Position 274 is a phosphoserine (S274). Residues 281–295 (SITNSTLTSTGSSEA) show a composition bias toward polar residues. One can recognise a VASt domain in the interval 372–543 (SGRQYVNEVF…ELTKTESTYL (172 aa)). Phosphotyrosine is present on Y389. Phosphoserine occurs at positions 550 and 581. Residues T584, T585, and T587 each carry the phosphothreonine modification. The chain crosses the membrane as a helical span at residues 623 to 643 (LLLVISCVICFSLVLLVVLNM).

Highly expressed in the adrenal gland (at protein level) and brain. Also found in the kidney, testis and macrophages.

The protein localises to the endoplasmic reticulum membrane. It is found in the cell membrane. Cholesterol transporter that mediates non-vesicular transport of cholesterol from the plasma membrane (PM) to the endoplasmic reticulum (ER). Contains unique domains for binding cholesterol and the PM, thereby serving as a molecular bridge for the transfer of cholesterol from the PM to the ER. Plays a crucial role in cholesterol homeostasis in the adrenal gland and has the unique ability to localize to the PM based on the level of membrane cholesterol. In lipid-poor conditions localizes to the ER membrane and in response to excess cholesterol in the PM is recruited to the endoplasmic reticulum-plasma membrane contact sites (EPCS) which is mediated by the GRAM domain. At the EPCS, the sterol-binding VASt/ASTER domain binds to the cholesterol in the PM and facilitates its transfer from the PM to ER. This is Protein Aster-B (Gramd1b) from Mus musculus (Mouse).